Consider the following 178-residue polypeptide: ATP synthase subunit delta (178 aa).

It belongs to the ATPase delta chain family. F-type ATPases have 2 components, F(1) - the catalytic core - and F(0) - the membrane proton channel. F(1) has five subunits: alpha(3), beta(3), gamma(1), delta(1), epsilon(1). F(0) has three main subunits: a(1), b(2) and c(10-14). The alpha and beta chains form an alternating ring which encloses part of the gamma chain. F(1) is attached to F(0) by a central stalk formed by the gamma and epsilon chains, while a peripheral stalk is formed by the delta and b chains.

The protein localises to the cell membrane. Its function is as follows. F(1)F(0) ATP synthase produces ATP from ADP in the presence of a proton or sodium gradient. F-type ATPases consist of two structural domains, F(1) containing the extramembraneous catalytic core and F(0) containing the membrane proton channel, linked together by a central stalk and a peripheral stalk. During catalysis, ATP synthesis in the catalytic domain of F(1) is coupled via a rotary mechanism of the central stalk subunits to proton translocation. Functionally, this protein is part of the stalk that links CF(0) to CF(1). It either transmits conformational changes from CF(0) to CF(1) or is implicated in proton conduction. In Streptococcus gordonii (strain Challis / ATCC 35105 / BCRC 15272 / CH1 / DL1 / V288), this protein is ATP synthase subunit delta.